A 358-amino-acid chain; its full sequence is Probable translocation protein Y4yK (358 aa).

The protein belongs to the FliN/MopA/SpaO family.

Its function is as follows. Could be involved in the secretion of an unknown factor. The sequence is that of Probable translocation protein Y4yK from Sinorhizobium fredii (strain NBRC 101917 / NGR234).